Reading from the N-terminus, the 308-residue chain is ATP synthase gamma chain (308 aa).

The protein belongs to the ATPase gamma chain family. As to quaternary structure, F-type ATPases have 2 components, CF(1) - the catalytic core - and CF(0) - the membrane proton channel. CF(1) has five subunits: alpha(3), beta(3), gamma(1), delta(1), epsilon(1). CF(0) has three main subunits: a, b and c.

Its subcellular location is the cell membrane. In terms of biological role, produces ATP from ADP in the presence of a proton gradient across the membrane. The gamma chain is believed to be important in regulating ATPase activity and the flow of protons through the CF(0) complex. The chain is ATP synthase gamma chain from Lacticaseibacillus paracasei (strain ATCC 334 / BCRC 17002 / CCUG 31169 / CIP 107868 / KCTC 3260 / NRRL B-441) (Lactobacillus paracasei).